The following is a 154-amino-acid chain: SsrA-binding protein (154 aa).

Belongs to the SmpB family.

The protein resides in the cytoplasm. In terms of biological role, required for rescue of stalled ribosomes mediated by trans-translation. Binds to transfer-messenger RNA (tmRNA), required for stable association of tmRNA with ribosomes. tmRNA and SmpB together mimic tRNA shape, replacing the anticodon stem-loop with SmpB. tmRNA is encoded by the ssrA gene; the 2 termini fold to resemble tRNA(Ala) and it encodes a 'tag peptide', a short internal open reading frame. During trans-translation Ala-aminoacylated tmRNA acts like a tRNA, entering the A-site of stalled ribosomes, displacing the stalled mRNA. The ribosome then switches to translate the ORF on the tmRNA; the nascent peptide is terminated with the 'tag peptide' encoded by the tmRNA and targeted for degradation. The ribosome is freed to recommence translation, which seems to be the essential function of trans-translation. This Treponema denticola (strain ATCC 35405 / DSM 14222 / CIP 103919 / JCM 8153 / KCTC 15104) protein is SsrA-binding protein.